Here is an 85-residue protein sequence, read N- to C-terminus: MTSERALTLAPGKVSTADIYEADFSFRREFVRQILQREFILFEISMYIIFIVTFCYKIILFLFRIIPKDLDHRQRNRGRKMSASA.

The helical transmembrane segment at 39-59 (FILFEISMYIIFIVTFCYKII) threads the bilayer.

The protein localises to the host membrane. This is an uncharacterized protein from Gallid herpesvirus 2 (strain Chicken/Md5/ATCC VR-987) (GaHV-2).